Reading from the N-terminus, the 215-residue chain is Small ribosomal subunit protein eS1 (215 aa).

This sequence belongs to the eukaryotic ribosomal protein eS1 family.

This chain is Small ribosomal subunit protein eS1, found in Halorubrum lacusprofundi (strain ATCC 49239 / DSM 5036 / JCM 8891 / ACAM 34).